We begin with the raw amino-acid sequence, 1796 residues long: Y' element ATP-dependent helicase protein 1 copy 5 (1796 aa).

Residues Ala743 to Lys767 are disordered. Positions Glu797–Ala974 constitute a Helicase ATP-binding domain. An ATP-binding site is contributed by Ala810–Thr817. Residues Lys1031–Gly1180 enclose the Helicase C-terminal domain. Disordered stretches follow at residues Ala1254–Thr1278 and Thr1294–Lys1421. Low complexity predominate over residues Thr1294–Ser1397. Basic and acidic residues predominate over residues Ala1398–Lys1421.

It belongs to the helicase family. Yeast subtelomeric Y' repeat subfamily.

In terms of biological role, catalyzes DNA unwinding and is involved in telomerase-independent telomere maintenance. The polypeptide is Y' element ATP-dependent helicase protein 1 copy 5 (YRF1-5) (Saccharomyces cerevisiae (strain ATCC 204508 / S288c) (Baker's yeast)).